The sequence spans 358 residues: Starch-binding domain-containing protein 1 (358 aa).

The Extracellular portion of the chain corresponds to Met1–Ser6. A helical transmembrane segment spans residues Ala7–Leu23. The Cytoplasmic segment spans residues Arg24–His358. Over residues Thr30 to Ala42 the composition is skewed to basic and acidic residues. 2 disordered regions span residues Thr30–Val70 and Ser104–Gly151. A compositionally biased stretch (low complexity) spans Pro50 to Gly66. A Phosphoserine modification is found at Ser65. Residues Glu106–Val115 are compositionally biased toward basic and acidic residues. At Ser117 the chain carries Phosphoserine. A compositionally biased stretch (polar residues) spans Pro126–Val140. A phosphoserine mark is found at Ser148, Ser175, Ser188, and Ser194. Positions His200–Val206 match the LIR motif. Phosphoserine is present on residues Ser210, Ser211, and Ser220. Residues Pro258–Ile357 enclose the CBM20 domain.

Interacts with the ATG8 family proteins GABARAP and GABARAPL1. Interacts with several glycogen-associated proteins, such as GYS2 (liver glycogen synthase), GDE (glycogen debranching enzyme), GBE1 (glycogen branching enzyme 1) and EPM2A (Laforin). Post-translationally, ubiquitinated, which leads to proteasomal degradation. In terms of tissue distribution, expressed at high level in skeletal and cardiac muscles. Moderately expressed in liver and placenta. No expression is found in pancreas, kidney or lung. Present in skeletal muscle, heart and placenta (at protein level).

It localises to the preautophagosomal structure membrane. The protein resides in the endoplasmic reticulum membrane. It is found in the cell membrane. Its subcellular location is the sarcolemma. The protein localises to the T-tubule. Acts as a cargo receptor for glycogen. Delivers its cargo to an autophagic pathway called glycophagy, resulting in the transport of glycogen to lysosomes. This chain is Starch-binding domain-containing protein 1, found in Homo sapiens (Human).